Reading from the N-terminus, the 857-residue chain is Protein translocase subunit SecA (857 aa).

ATP is bound by residues Q88, 106–110 (GEGKT), and D496. Residues C833, C835, C844, and C845 each coordinate Zn(2+).

The protein belongs to the SecA family. Monomer and homodimer. Part of the essential Sec protein translocation apparatus which comprises SecA, SecYEG and auxiliary proteins SecDF-YajC and YidC. The cofactor is Zn(2+).

It is found in the cell inner membrane. Its subcellular location is the cytoplasm. The catalysed reaction is ATP + H2O + cellular proteinSide 1 = ADP + phosphate + cellular proteinSide 2.. Its function is as follows. Part of the Sec protein translocase complex. Interacts with the SecYEG preprotein conducting channel. Has a central role in coupling the hydrolysis of ATP to the transfer of proteins into and across the cell membrane, serving as an ATP-driven molecular motor driving the stepwise translocation of polypeptide chains across the membrane. The chain is Protein translocase subunit SecA from Sulfurimonas denitrificans (strain ATCC 33889 / DSM 1251) (Thiomicrospira denitrificans (strain ATCC 33889 / DSM 1251)).